Consider the following 547-residue polypeptide: Intercellular adhesion molecule 3 (547 aa).

The first 29 residues, methionine 1–glycine 29, serve as a signal peptide directing secretion. Topologically, residues glutamine 30–histidine 485 are extracellular. Residues glycine 46–serine 103 form the Ig-like C2-type 1 domain. Asparagine 52, asparagine 84, asparagine 87, asparagine 101, asparagine 110, and asparagine 134 each carry an N-linked (GlcNAc...) asparagine glycan. Intrachain disulfides connect cysteine 53–cysteine 96 and cysteine 57–cysteine 100. The region spanning glycine 132–glutamine 197 is the Ig-like C2-type 2 domain. An intrachain disulfide couples cysteine 139 to cysteine 190. N-linked (GlcNAc...) asparagine glycosylation is found at asparagine 206, asparagine 264, asparagine 295, asparagine 308, asparagine 320, asparagine 363, asparagine 389, asparagine 453, and asparagine 457. Residues glutamate 234 to glutamate 301 form the Ig-like C2-type 3 domain. Cysteine 241 and cysteine 294 are joined by a disulfide. The region spanning glycine 329–aspartate 382 is the Ig-like C2-type 4 domain. An intrachain disulfide couples cysteine 336 to cysteine 375. Residues lysine 416–glycine 469 form the Ig-like C2-type 5 domain. Cysteine 423 and cysteine 462 form a disulfide bridge. The chain crosses the membrane as a helical span at residues phenylalanine 486–phenylalanine 510. The Cytoplasmic portion of the chain corresponds to arginine 511–glutamate 547.

Belongs to the immunoglobulin superfamily. ICAM family. As to quaternary structure, interacts with moesin/MSN. Upon stimulation by a physiologic stimuli becomes rapidly and transiently phosphorylated on serine residues. In terms of tissue distribution, leukocytes.

It is found in the membrane. ICAM proteins are ligands for the leukocyte adhesion protein LFA-1 (integrin alpha-L/beta-2). ICAM3 is also a ligand for integrin alpha-D/beta-2. In association with integrin alpha-L/beta-2, contributes to apoptotic neutrophil phagocytosis by macrophages. This Pan troglodytes (Chimpanzee) protein is Intercellular adhesion molecule 3 (ICAM3).